A 222-amino-acid polypeptide reads, in one-letter code: MALSLSQTRPPSLSHSHTLSVIVPKRTFVSIRCGPRDNRGPLLKGRILSTEAIQSIQSLKRAHRTGVSLSLTLRPLRRLIKSDLISVLRELLRQDYCTLAVHVLSTLRTEYPPLDLVLYADIVNALTRNKEFDEIDRLIGEIDGIDQRSDDKALAKLIRAVVGAERRESVVRVYTLMRESGWGSESWEADEYVAEVLSKGLLRLGEPDLASQVSLKSSILKP.

The N-terminal 32 residues, 1 to 32, are a transit peptide targeting the chloroplast; that stretch reads MALSLSQTRPPSLSHSHTLSVIVPKRTFVSIR. 2 PPR repeats span residues 115 to 149 and 150 to 184; these read DLVL…DQRS and DDKA…GWGS.

It belongs to the PPR family. P subfamily.

It localises to the plastid. Its subcellular location is the chloroplast thylakoid membrane. Functionally, essential protein required during embryogenesis. Mediates group II organellar RNA introns splicing (e.g. ycf3-2 and trnA). Binds weakly to specific RNA. Promotes the biogenesis of chloroplast thylakoid membranes. This chain is Protein THYLAKOID ASSEMBLY 8, chloroplastic, found in Arabidopsis thaliana (Mouse-ear cress).